The sequence spans 177 residues: MAEFATIARPYAKALFGLAQEKNQIESWLGGLEKLAAVVQEGKVALLIDRPETNASEKADILIDLVGLKDKELKNFVIVLAGQKRLSILPEVYAQYQDLTLSFNHIKSAVIYSAYPLTDKQVGELAQMLNKRFDSELKISVEIEPELIGGIKVEVGDQVLDLSVQGKLSALYTTMTN.

This sequence belongs to the ATPase delta chain family. F-type ATPases have 2 components, F(1) - the catalytic core - and F(0) - the membrane proton channel. F(1) has five subunits: alpha(3), beta(3), gamma(1), delta(1), epsilon(1). F(0) has three main subunits: a(1), b(2) and c(10-14). The alpha and beta chains form an alternating ring which encloses part of the gamma chain. F(1) is attached to F(0) by a central stalk formed by the gamma and epsilon chains, while a peripheral stalk is formed by the delta and b chains.

The protein resides in the cell inner membrane. F(1)F(0) ATP synthase produces ATP from ADP in the presence of a proton or sodium gradient. F-type ATPases consist of two structural domains, F(1) containing the extramembraneous catalytic core and F(0) containing the membrane proton channel, linked together by a central stalk and a peripheral stalk. During catalysis, ATP synthesis in the catalytic domain of F(1) is coupled via a rotary mechanism of the central stalk subunits to proton translocation. In terms of biological role, this protein is part of the stalk that links CF(0) to CF(1). It either transmits conformational changes from CF(0) to CF(1) or is implicated in proton conduction. This chain is ATP synthase subunit delta, found in Neisseria gonorrhoeae (strain NCCP11945).